Here is a 795-residue protein sequence, read N- to C-terminus: MDILLNLINYSNNLKSQIKNNNNPENGSIVVLLSNISNDFEEIKDLQYKQQQQQQQNPNNIIKTFSNTIFKRIKHFISISINFGIKTIATKLLLIKKRKNITSSTSTSTCTTITIDKIINTILFENLNIIIKLLSLIEMIIIREYNYCKNTITQQQQQPILIWIGNSTNNNNKNKKIKIINLESIEKSINYLKTIKQQNKNTRIIIDNDIPLDHIKQLLSQFNNFPINIICFKNKCKNNEKEKKEEEEDHDHDHDDKKKEKEDKEKEEEEEEEDSNDDFEINDYITFLSIDFNNHFISLSNTEILYDYFINSMNYKPKFITTTTTTTTTTVNGSKNSSNTTTPITTKDDIDLDSDGEKKESDDDDDDDLTDEDTSQHNEIYSTSPKVSHSTFCQSSPTLLDLDLQQQQQQQQQQNDKIGGQQEKQITPNRSYTIRNMKPVSNQRYYSTPNKTVIINQQQQQQQQQQSSTSPSISPSSSNIKSEPNFARIDYKTSMFISNKPVAITTGKVATTQIHLRDALDNPVPTNLTSSNPSGFGPISSSPLHLTLLGPTNEILPFYCFVVGSGIFGISFFPTIHGIYTLSASLDYNNNNNNNNNNNNNSNNNNGIKKDLSIKNSPTIFKSTADGIISPNEIRSLHNSNEKKRKLPLLDFESTSNDSIDLLDFIIDSVDKNNNNNNNNNNNNNNNNNNNNNNNNNNNNNNNNNNNNNNNNNNNNNNNKENHNQNQNEIENENKNENENENENDKNGIIFINQNLNKEFNESSPEMSPTLQVEDDSNISAVNNDSSEIEATLAI.

Residues 228 to 280 are a coiled coil; it reads NIICFKNKCKNNEKEKKEEEEDHDHDHDDKKKEKEDKEKEEEEEEEDSNDDFE. Disordered regions lie at residues 242 to 278, 326 to 430, 455 to 484, and 673 to 743; these read EKKE…SNDD, TTTT…TPNR, INQQ…KSEP, and NNNN…NENE. Over residues 251–264 the composition is skewed to basic and acidic residues; the sequence is DHDHDDKKKEKEDK. Acidic residues predominate over residues 265-278; that stretch reads EKEEEEEEEDSNDD. The span at 326–345 shows a compositional bias: low complexity; sequence TTTTTVNGSKNSSNTTTPIT. Over residues 362-373 the composition is skewed to acidic residues; sequence DDDDDDDLTDED. A compositionally biased stretch (polar residues) spans 377–398; that stretch reads HNEIYSTSPKVSHSTFCQSSPT. Low complexity-rich tracts occupy residues 399–414, 455–480, and 673–729; these read LLDL…QQQQ, INQQ…SSNI, and NNNN…NQNE. Basic and acidic residues predominate over residues 732–743; the sequence is NENKNENENENE.

This is an uncharacterized protein from Dictyostelium discoideum (Social amoeba).